We begin with the raw amino-acid sequence, 125 residues long: NADPH-dependent 7-cyano-7-deazaguanine reductase (125 aa).

Cysteine 41 (thioimide intermediate) is an active-site residue. The active-site Proton donor is aspartate 48. Substrate-binding positions include 63-65 and 82-83; these read IEL and HE.

Belongs to the GTP cyclohydrolase I family. QueF type 1 subfamily.

The protein localises to the cytoplasm. It catalyses the reaction 7-aminomethyl-7-carbaguanine + 2 NADP(+) = 7-cyano-7-deazaguanine + 2 NADPH + 3 H(+). It participates in tRNA modification; tRNA-queuosine biosynthesis. Functionally, catalyzes the NADPH-dependent reduction of 7-cyano-7-deazaguanine (preQ0) to 7-aminomethyl-7-deazaguanine (preQ1). The chain is NADPH-dependent 7-cyano-7-deazaguanine reductase from Sulfurovum sp. (strain NBC37-1).